We begin with the raw amino-acid sequence, 443 residues long: Fatty acid desaturase 3 (443 aa).

The Cytoplasmic portion of the chain corresponds to Met1–Pro130. The region spanning Leu18–Ala95 is the Cytochrome b5 heme-binding domain. The chain crosses the membrane as a helical span at residues Ala131–Ile151. Tyr152 is a topological domain (lumenal). A helical transmembrane segment spans residues Met153–Ala173. The Cytoplasmic portion of the chain corresponds to Gln174–Asn259. The short motif at His180–His184 is the Histidine box-1 element. The Histidine box-2 signature appears at His217–His221. Residues His260–Val280 form a helical membrane-spanning segment. Residues Glu281–Asn282 lie on the Lumenal side of the membrane. A helical transmembrane segment spans residues Leu283–Ala303. A topological domain (cytoplasmic) is located at residue Arg304. A helical membrane pass occupies residues Phe305–Val325. Residues Arg326 to Gln443 are Lumenal-facing. The Histidine box-3 signature appears at Gln381–His385.

Belongs to the fatty acid desaturase type 1 family.

The protein localises to the endoplasmic reticulum membrane. It catalyses the reaction an N-acylsphing-4-enine + 2 Fe(II)-[cytochrome b5] + O2 + 2 H(+) = an N-acyl-sphinga-4E,14Z-dienine + 2 Fe(III)-[cytochrome b5] + 2 H2O. It carries out the reaction N-(hexanoyl)sphing-4-enine + 2 Fe(II)-[cytochrome b5] + O2 + 2 H(+) = N-hexanoyl-sphinga-4E,14Z-dienine + 2 Fe(III)-[cytochrome b5] + 2 H2O. The catalysed reaction is sphing-4-enine + 2 Fe(II)-[cytochrome b5] + O2 + 2 H(+) = sphinga-4E,14Z-dienine + 2 Fe(III)-[cytochrome b5] + 2 H2O. The enzyme catalyses (11E)-octadecenoyl-CoA + 2 Fe(II)-[cytochrome b5] + O2 + 2 H(+) = (11E,13Z)-octadecadienoyl-CoA + 2 Fe(III)-[cytochrome b5] + 2 H2O. It catalyses the reaction N-acyl-1-deoxysphinganine + 2 Fe(II)-[cytochrome b5] + O2 + 2 H(+) = N-acyl-1-deoxysphing-14Z-enine + 2 Fe(III)-[cytochrome b5] + 2 H2O. It carries out the reaction an N-acylsphinganine + 2 Fe(II)-[cytochrome b5] + O2 + 2 H(+) = an N-acylsphing-14Z-enine + 2 Fe(III)-[cytochrome b5] + 2 H2O. It functions in the pathway lipid metabolism; polyunsaturated fatty acid biosynthesis. It participates in lipid metabolism; sphingolipid metabolism. Functionally, mammals have different sphingoid bases that differ in their length and/or pattern of desaturation and hydroxyl groups. The predominant sphingoid base that comprises mammalian ceramides is sphing-4-enine (sphingosine or SPH) which has a trans (E) desaturation at carbon 4. FADS3 is a desaturase that introduces a cis (Z) double bond between carbon 14 and carbon 15 of the sphingoid base (also known as long chain base, LCB), producing LCBs such as sphinga-4,14-dienine (SPD, d18:2(4E,14Z)) from SPH. Prefers SPH-containing ceramides (N-acylsphing-4-enines) as substrates. Capable of metabolizing also the SPH in its free form. SPD ceramides occur widely in mammalian tissues and cells. Due to their unusual structure containing a cis double bond, SPD ceramides may have an opposite, negative role in lipid microdomain formation relative to conventional ceramides. Could be involved in the detoxification of 1-deoxy sphingolipids, by desaturating the cytotoxic 1-deoxysphinganine (1-deoxySA, m18:0), produced under pathological conditions, to 1-deoxysphingenine (1-deoxysphingosine, 1-deoxySO, m18:1). Although prefers SPH-containing ceramides (N-acylsphing-4-enines) as substrates, it also exhibits activity toward dihydrosphingosine-containing CERs (N-acylsphinganines) and produces 14Z-SPH-containing sphingolipids. Its desaturase mechanism involves an electron transfer facilitated by cytochrome b5. FADS3 also acts as a methyl-end fatty acyl coenzyme A (CoA) desaturase that introduces a cis double bond between the preexisting double bond and the terminal methyl group of the fatty acyl chain. Desaturates (11E)-octadecenoate (trans-vaccenoate, the predominant trans fatty acid in human milk) at carbon 13 to generate (11E,13Z)-octadecadienoate (also known as conjugated linoleic acid 11E,13Z-CLA). The sequence is that of Fatty acid desaturase 3 from Bos taurus (Bovine).